The chain runs to 338 residues: Ketol-acid reductoisomerase (NADP(+)) (338 aa).

The 181-residue stretch at 1–181 folds into the KARI N-terminal Rossmann domain; sequence MHVYYDKDCD…GGGRTGIIET (181 aa). Residues 24 to 27, Arg47, Ser50, Thr52, and 82 to 85 each bind NADP(+); these read YGSQ and DEFQ. Residue His107 is part of the active site. Residue Gly133 coordinates NADP(+). Residues 182-327 form the KARI C-terminal knotted domain; it reads TFKDETETDL…AKLRAMMPWI (146 aa). Mg(2+) contacts are provided by Asp190, Glu194, Glu226, and Glu230. Ser251 lines the substrate pocket.

Belongs to the ketol-acid reductoisomerase family. It depends on Mg(2+) as a cofactor.

It catalyses the reaction (2R)-2,3-dihydroxy-3-methylbutanoate + NADP(+) = (2S)-2-acetolactate + NADPH + H(+). The catalysed reaction is (2R,3R)-2,3-dihydroxy-3-methylpentanoate + NADP(+) = (S)-2-ethyl-2-hydroxy-3-oxobutanoate + NADPH + H(+). The protein operates within amino-acid biosynthesis; L-isoleucine biosynthesis; L-isoleucine from 2-oxobutanoate: step 2/4. It participates in amino-acid biosynthesis; L-valine biosynthesis; L-valine from pyruvate: step 2/4. In terms of biological role, involved in the biosynthesis of branched-chain amino acids (BCAA). Catalyzes an alkyl-migration followed by a ketol-acid reduction of (S)-2-acetolactate (S2AL) to yield (R)-2,3-dihydroxy-isovalerate. In the isomerase reaction, S2AL is rearranged via a Mg-dependent methyl migration to produce 3-hydroxy-3-methyl-2-ketobutyrate (HMKB). In the reductase reaction, this 2-ketoacid undergoes a metal-dependent reduction by NADPH to yield (R)-2,3-dihydroxy-isovalerate. In Cellvibrio japonicus (strain Ueda107) (Pseudomonas fluorescens subsp. cellulosa), this protein is Ketol-acid reductoisomerase (NADP(+)).